A 368-amino-acid chain; its full sequence is UPF0284 protein SYNPCC7002_A1742 (368 aa).

This sequence belongs to the UPF0284 family.

The sequence is that of UPF0284 protein SYNPCC7002_A1742 from Picosynechococcus sp. (strain ATCC 27264 / PCC 7002 / PR-6) (Agmenellum quadruplicatum).